Consider the following 505-residue polypeptide: Lysine--tRNA ligase (505 aa).

Mg(2+) is bound by residues glutamate 415 and glutamate 422.

This sequence belongs to the class-II aminoacyl-tRNA synthetase family. As to quaternary structure, homodimer. Requires Mg(2+) as cofactor.

Its subcellular location is the cytoplasm. It catalyses the reaction tRNA(Lys) + L-lysine + ATP = L-lysyl-tRNA(Lys) + AMP + diphosphate. In Xanthomonas axonopodis pv. citri (strain 306), this protein is Lysine--tRNA ligase.